The sequence spans 23 residues: U1-poneritoxin-Da3b (23 aa).

The protein belongs to the non-disulfide-bridged peptide (NDBP) superfamily. Medium-length antimicrobial peptide (group 3) family. Ponericin-W subfamily. As to expression, expressed by the venom gland.

The protein localises to the secreted. It is found in the target cell membrane. May have antimicrobial properties, like most ant linear peptides. May act by disrupting the integrity of the bacterial cell membrane. This chain is U1-poneritoxin-Da3b, found in Dinoponera australis (Giant neotropical hunting ant).